The primary structure comprises 93 residues: MADITDIKTILYTEKTLNLQEGGMVVIQTSPKMTKTSLKAVLKEYFGFTPLKINSLRIDGKVKRFRGRLGVRDNFKKFYVKLPEGVSLENVGA.

This sequence belongs to the universal ribosomal protein uL23 family. In terms of assembly, part of the 50S ribosomal subunit. Contacts protein L29, and trigger factor when it is bound to the ribosome.

One of the early assembly proteins it binds 23S rRNA. One of the proteins that surrounds the polypeptide exit tunnel on the outside of the ribosome. Forms the main docking site for trigger factor binding to the ribosome. The chain is Large ribosomal subunit protein uL23 from Campylobacter hominis (strain ATCC BAA-381 / DSM 21671 / CCUG 45161 / LMG 19568 / NCTC 13146 / CH001A).